Consider the following 129-residue polypeptide: Small ribosomal subunit protein uS11 (129 aa).

This sequence belongs to the universal ribosomal protein uS11 family. As to quaternary structure, part of the 30S ribosomal subunit. Interacts with proteins S7 and S18. Binds to IF-3.

Functionally, located on the platform of the 30S subunit, it bridges several disparate RNA helices of the 16S rRNA. Forms part of the Shine-Dalgarno cleft in the 70S ribosome. The polypeptide is Small ribosomal subunit protein uS11 (Glaesserella parasuis serovar 5 (strain SH0165) (Haemophilus parasuis)).